The sequence spans 260 residues: Phosphate import ATP-binding protein PstB (260 aa).

Residues 14-255 form the ABC transporter domain; sequence IETENLSLFY…PKNTKTEEYI (242 aa). 46–53 provides a ligand contact to ATP; that stretch reads GPSGCGKS.

It belongs to the ABC transporter superfamily. Phosphate importer (TC 3.A.1.7) family. In terms of assembly, the complex is composed of two ATP-binding proteins (PstB), two transmembrane proteins (PstC and PstA) and a solute-binding protein (PstS).

Its subcellular location is the cell inner membrane. The enzyme catalyses phosphate(out) + ATP + H2O = ADP + 2 phosphate(in) + H(+). In terms of biological role, part of the ABC transporter complex PstSACB involved in phosphate import. Responsible for energy coupling to the transport system. This Borrelia garinii subsp. bavariensis (strain ATCC BAA-2496 / DSM 23469 / PBi) (Borreliella bavariensis) protein is Phosphate import ATP-binding protein PstB.